A 533-amino-acid chain; its full sequence is Probable DNA ligase (533 aa).

E211 serves as a coordination point for ATP. K213 serves as the catalytic N6-AMP-lysine intermediate. The ATP site is built by R218, R233, E262, F302, R374, and K380. The disordered stretch occupies residues 512–533; it reads LAGEAAEKGQAEGGGEELEDDG.

Belongs to the ATP-dependent DNA ligase family. Mg(2+) serves as cofactor.

The enzyme catalyses ATP + (deoxyribonucleotide)n-3'-hydroxyl + 5'-phospho-(deoxyribonucleotide)m = (deoxyribonucleotide)n+m + AMP + diphosphate.. DNA ligase that seals nicks in double-stranded DNA during DNA replication, DNA recombination and DNA repair. This is Probable DNA ligase from Sorangium cellulosum (strain So ce56) (Polyangium cellulosum (strain So ce56)).